The chain runs to 181 residues: MDGLMSSADEILDIVDENDRVVGQARRGDAYARGLRHRCVFVWARDPEGRVFVHRRTATKLVFPAPYDMFVGGVVGAGESYDDAALREAEEELGASGLPRPEFLFKFLYDDGAGRTWWSAVYEVRVAGAVSPQVEEVAWHGFLPEAELEGRLGEWEFVPDGLSAYARLRAWRGASGPGSVG.

The 141-residue stretch at 35–175 (LRHRCVFVWA…ARLRAWRGAS (141 aa)) folds into the Nudix hydrolase domain. A Nudix box motif is present at residues 72–94 (GGVVGAGESYDDAALREAEEELG). Residues glutamate 88 and glutamate 92 each coordinate Mg(2+).

This sequence belongs to the Nudix hydrolase family. The cofactor is Mg(2+).

This is an uncharacterized protein from Streptomyces coelicolor (strain ATCC BAA-471 / A3(2) / M145).